We begin with the raw amino-acid sequence, 881 residues long: Valine--tRNA ligase (881 aa).

The 'HIGH' region signature appears at 49 to 59; the sequence is PNVTGKLHLGH. The 'KMSKS' region signature appears at 526 to 530; it reads KMSKS. Residue Lys-529 coordinates ATP. Positions 810–881 form a coiled coil; sequence LADLINLDEE…VRQRLADLEK (72 aa).

The protein belongs to the class-I aminoacyl-tRNA synthetase family. ValS type 1 subfamily. As to quaternary structure, monomer.

The protein localises to the cytoplasm. It catalyses the reaction tRNA(Val) + L-valine + ATP = L-valyl-tRNA(Val) + AMP + diphosphate. Functionally, catalyzes the attachment of valine to tRNA(Val). As ValRS can inadvertently accommodate and process structurally similar amino acids such as threonine, to avoid such errors, it has a 'posttransfer' editing activity that hydrolyzes mischarged Thr-tRNA(Val) in a tRNA-dependent manner. The chain is Valine--tRNA ligase from Bacillus anthracis.